The sequence spans 606 residues: Sporulation kinase A (606 aa).

Residues 3–73 (QDTQHVKPLQ…SYFYNEHHLM (71 aa)) form the PAS 1 domain. Residues 77-116 (FRFIKKDHTIVWVEAAVEIVTTRAERTEREIILKMKVLEE) form the PAC 1 domain. The 75-residue stretch at 140–214 (YITDDYERLV…IRMQKGMEVG (75 aa)) folds into the PAS 2 domain. In terms of domain architecture, PAC 2 spans 218–255 (QTWKRLDGTPVHLEVKASPTVYKNQQAELLLLIDISSR). The 71-residue stretch at 265–335 (SRERYQLLIQ…ERIQNIAEQK (71 aa)) folds into the PAS 3 domain. Residues 402 to 606 (GIAHEIRNPL…TAFKISFPKK (205 aa)) enclose the Histidine kinase domain. His405 bears the Phosphohistidine; by autocatalysis mark.

The enzyme catalyses ATP + protein L-histidine = ADP + protein N-phospho-L-histidine.. In terms of biological role, phosphorylates the sporulation-regulatory proteins spo0A and spo0F. It also autophosphorylates in the presence of ATP. The polypeptide is Sporulation kinase A (kinA) (Bacillus subtilis (strain 168)).